A 292-amino-acid chain; its full sequence is G1/S-specific cyclin-D3 (292 aa).

In terms of domain architecture, Cyclin N-terminal spans 27 to 152; the sequence is VLQSLLRLEE…LVLGKLKWDL (126 aa). The tract at residues 255 to 292 is disordered; it reads LREAAQTSPSPAPKAPRGSSSQGPSQTSTPTDVTAIHL. Phosphoserine occurs at positions 264 and 279. Low complexity predominate over residues 272–285; sequence GSSSQGPSQTSTPT. Phosphothreonine is present on Thr283.

This sequence belongs to the cyclin family. Cyclin D subfamily. In terms of assembly, interacts with the CDK4 and CDK6 protein kinases to form a serine/threonine kinase holoenzyme complex. The cyclin subunit imparts substrate specificity to the complex. Interacts with ATF5. Interacts with EIF3K. Component of the ternary complex cyclin D/CDK4/CDKN1B required for nuclear translocation and modulation of CDK4-mediated kinase activity. Can form similar complexes with either CDKN1A or CDKN2A. Phosphorylation at Thr-283 by MAP kinases is required for ubiquitination and degradation by the DCX(AMBRA1) complex. In terms of processing, ubiquitinated by the DCX(AMBRA1) complex during the transition from G1 to S cell phase, leading to its degradation: ubiquitination is dependent on Thr-283 phosphorylation. The DCX(AMBRA1) complex represents the major regulator of CCND3 stability during the G1/S transition. Polyubiquitinated by the SCF(FBXL2) complex, leading to proteasomal degradation.

Its subcellular location is the nucleus. It localises to the cytoplasm. Functionally, regulatory component of the cyclin D3-CDK4 (DC) complex that phosphorylates and inhibits members of the retinoblastoma (RB) protein family including RB1 and regulates the cell-cycle during G(1)/S transition. Phosphorylation of RB1 allows dissociation of the transcription factor E2F from the RB/E2F complex and the subsequent transcription of E2F target genes which are responsible for the progression through the G(1) phase. Hypophosphorylates RB1 in early G(1) phase. Cyclin D-CDK4 complexes are major integrators of various mitogenenic and antimitogenic signals. Component of the ternary complex, cyclin D3/CDK4/CDKN1B, required for nuclear translocation and activity of the cyclin D-CDK4 complex. Shows transcriptional coactivator activity with ATF5 independently of CDK4. The sequence is that of G1/S-specific cyclin-D3 (CCND3) from Bos taurus (Bovine).